We begin with the raw amino-acid sequence, 93 residues long: Cobalt transport protein CbiN (93 aa).

2 helical membrane-spanning segments follow: residues 5 to 25 (LILLAMVIALVILPFFIDHGG) and 62 to 82 (SLLFTLQGSLGAAVIFYILGY).

This sequence belongs to the CbiN family. Forms an energy-coupling factor (ECF) transporter complex composed of an ATP-binding protein (A component, CbiO), a transmembrane protein (T component, CbiQ) and 2 possible substrate-capture proteins (S components, CbiM and CbiN) of unknown stoichimetry.

The protein resides in the cell inner membrane. The protein operates within cofactor biosynthesis; adenosylcobalamin biosynthesis. Its function is as follows. Part of the energy-coupling factor (ECF) transporter complex CbiMNOQ involved in cobalt import. The polypeptide is Cobalt transport protein CbiN (Citrobacter koseri (strain ATCC BAA-895 / CDC 4225-83 / SGSC4696)).